The primary structure comprises 238 residues: LexA repressor (238 aa).

The segment at residues 26–46 (FDEMKDALELRSKSGIHRLIS) is a DNA-binding region (H-T-H motif). Catalysis depends on for autocatalytic cleavage activity residues S159 and K197.

This sequence belongs to the peptidase S24 family. Homodimer.

It catalyses the reaction Hydrolysis of Ala-|-Gly bond in repressor LexA.. Represses a number of genes involved in the response to DNA damage (SOS response), including recA and lexA. In the presence of single-stranded DNA, RecA interacts with LexA causing an autocatalytic cleavage which disrupts the DNA-binding part of LexA, leading to derepression of the SOS regulon and eventually DNA repair. This chain is LexA repressor, found in Gluconobacter oxydans (strain 621H) (Gluconobacter suboxydans).